The sequence spans 120 residues: NAD(P)H-quinone oxidoreductase subunit 3, chloroplastic (120 aa).

3 helical membrane-spanning segments follow: residues 9–29, 64–84, and 88–108; these read IFWA…WISA, MFAL…PWAM, and VLGI…VVGL.

It belongs to the complex I subunit 3 family. As to quaternary structure, NDH is composed of at least 16 different subunits, 5 of which are encoded in the nucleus.

It localises to the plastid. Its subcellular location is the chloroplast thylakoid membrane. It carries out the reaction a plastoquinone + NADH + (n+1) H(+)(in) = a plastoquinol + NAD(+) + n H(+)(out). The catalysed reaction is a plastoquinone + NADPH + (n+1) H(+)(in) = a plastoquinol + NADP(+) + n H(+)(out). In terms of biological role, NDH shuttles electrons from NAD(P)H:plastoquinone, via FMN and iron-sulfur (Fe-S) centers, to quinones in the photosynthetic chain and possibly in a chloroplast respiratory chain. The immediate electron acceptor for the enzyme in this species is believed to be plastoquinone. Couples the redox reaction to proton translocation, and thus conserves the redox energy in a proton gradient. The chain is NAD(P)H-quinone oxidoreductase subunit 3, chloroplastic from Oryza nivara (Indian wild rice).